Consider the following 105-residue polypeptide: UPF0235 protein CT1832 (105 aa).

This sequence belongs to the UPF0235 family.

The chain is UPF0235 protein CT1832 from Chlorobaculum tepidum (strain ATCC 49652 / DSM 12025 / NBRC 103806 / TLS) (Chlorobium tepidum).